A 356-amino-acid polypeptide reads, in one-letter code: GDSL esterase/lipase At5g37690 (356 aa).

The first 18 residues, 1-18, serve as a signal peptide directing secretion; the sequence is MMILRLALAIVISTYATA. The active-site Nucleophile is the Ser34. 2 N-linked (GlcNAc...) asparagine glycosylation sites follow: Asn116 and Asn291. Residues Asp322 and His325 contribute to the active site.

The protein belongs to the 'GDSL' lipolytic enzyme family.

Its subcellular location is the secreted. This chain is GDSL esterase/lipase At5g37690, found in Arabidopsis thaliana (Mouse-ear cress).